The primary structure comprises 145 residues: Shadow of prion protein (145 aa).

Positions 1–24 (MNWAAAVCWALLLAATFLCDGSAA) are cleaved as a signal peptide. A glycan (N-linked (GlcNAc...) asparagine) is linked at asparagine 105. Serine 119 is lipidated: GPI-anchor amidated serine. Positions 120-145 (GAGPTGHRHLCPLLGGALGALRLLRP) are cleaved as a propeptide — removed in mature form.

The protein belongs to the SPRN family. N-glycosylated. As to expression, mainly expressed in brain.

The protein localises to the cell membrane. Functionally, prion-like protein that has PrP(C)-like neuroprotective activity. May act as a modulator for the biological actions of normal and abnormal PrP. The chain is Shadow of prion protein (SPRN) from Ovis aries (Sheep).